Here is a 363-residue protein sequence, read N- to C-terminus: 5-formaminoimidazole-4-carboxamide-1-(beta)-D-ribofuranosyl 5'-monophosphate synthetase (363 aa).

The 5-amino-1-(5-phospho-beta-D-ribosyl)imidazole-4-carboxamide site is built by histidine 29 and serine 96. One can recognise an ATP-grasp domain in the interval 118–350 (RDILRWESER…MGRRVAREIR (233 aa)). ATP-binding positions include 148–210 (PEEI…TNFC) and glutamate 232. Asparagine 260 provides a ligand contact to 5-amino-1-(5-phospho-beta-D-ribosyl)imidazole-4-carboxamide. Mg(2+) is bound by residues glutamine 299 and glutamate 312.

Belongs to the phosphohexose mutase family. Mg(2+) is required as a cofactor. Mn(2+) serves as cofactor.

It carries out the reaction 5-amino-1-(5-phospho-beta-D-ribosyl)imidazole-4-carboxamide + formate + ATP = 5-formamido-1-(5-phospho-D-ribosyl)imidazole-4-carboxamide + ADP + phosphate. It participates in purine metabolism; IMP biosynthesis via de novo pathway; 5-formamido-1-(5-phospho-D-ribosyl)imidazole-4-carboxamide from 5-amino-1-(5-phospho-D-ribosyl)imidazole-4-carboxamide (formate route): step 1/1. Catalyzes the ATP- and formate-dependent formylation of 5-aminoimidazole-4-carboxamide-1-beta-d-ribofuranosyl 5'-monophosphate (AICAR) to 5-formaminoimidazole-4-carboxamide-1-beta-d-ribofuranosyl 5'-monophosphate (FAICAR) in the absence of folates. The chain is 5-formaminoimidazole-4-carboxamide-1-(beta)-D-ribofuranosyl 5'-monophosphate synthetase from Methanothermobacter thermautotrophicus (strain ATCC 29096 / DSM 1053 / JCM 10044 / NBRC 100330 / Delta H) (Methanobacterium thermoautotrophicum).